The chain runs to 183 residues: Peptidyl-tRNA hydrolase (183 aa).

Y15 is a binding site for tRNA. H20 serves as the catalytic Proton acceptor. TRNA is bound by residues Y67 and N69.

Belongs to the PTH family. Monomer.

It localises to the cytoplasm. It carries out the reaction an N-acyl-L-alpha-aminoacyl-tRNA + H2O = an N-acyl-L-amino acid + a tRNA + H(+). Its function is as follows. Hydrolyzes ribosome-free peptidyl-tRNAs (with 1 or more amino acids incorporated), which drop off the ribosome during protein synthesis, or as a result of ribosome stalling. Functionally, catalyzes the release of premature peptidyl moieties from peptidyl-tRNA molecules trapped in stalled 50S ribosomal subunits, and thus maintains levels of free tRNAs and 50S ribosomes. The chain is Peptidyl-tRNA hydrolase from Chlamydia caviae (strain ATCC VR-813 / DSM 19441 / 03DC25 / GPIC) (Chlamydophila caviae).